A 1320-amino-acid chain; its full sequence is Immunoglobulin superfamily member 1 (1320 aa).

Positions 1–18 are cleaved as a signal peptide; that stretch reads MMLRTFTLLLLCIWLNRG. The Extracellular portion of the chain corresponds to 19 to 504; it reads MTSMAAVESQ…LPWNSILNEA (486 aa). Ig-like C2-type domains follow at residues 29–113, 115–212, 224–308, 312–399, and 401–482; these read PELW…KILE, EAPG…KLVV, HPGP…IWVT, PKTW…ATYN, and VELI…HRSE. An N-linked (GlcNAc...) asparagine glycan is attached at Asn44. A disulfide bridge connects residues Cys49 and Cys97. Residues Asn329, Asn365, and Asn372 are each glycosylated (N-linked (GlcNAc...) asparagine). Cystine bridges form between Cys334–Cys383 and Cys423–Cys466. Residues 505-525 traverse the membrane as a helical segment; sequence IRVSLTVQFLSLLLLVLWLQW. Over 526–534 the chain is Cytoplasmic; that stretch reads KCRRLRLRE. Residues 535–555 traverse the membrane as a helical segment; sequence AWLLGTAQGVAMLVILIALLC. The Extracellular segment spans residues 556 to 1320; the sequence is CGLCNGALTE…GVSVEQTVPI (765 aa). Ig-like C2-type domains follow at residues 572 to 665, 662 to 756, 761 to 853, 857 to 942, 949 to 1044, 1049 to 1134, and 1145 to 1226; these read PTPK…VGTD, VGTD…ELVI, PKPF…LIVT, PKPT…YLST, TDTF…ELIV, PKPS…NHSN, and PKPS…EPSD. N-linked (GlcNAc...) asparagine glycosylation is found at Asn591, Asn731, Asn782, Asn830, Asn874, Asn923, Asn970, Asn1011, and Asn1066. Residues Cys783 and Cys833 are joined by a disulfide bond. Cysteines 879 and 926 form a disulfide. An intrachain disulfide couples Cys1071 to Cys1118. N-linked (GlcNAc...) asparagine glycans are attached at residues Asn1131 and Asn1207. Cys1167 and Cys1210 are disulfide-bonded.

As to quaternary structure, interacts with INHA; the interaction is not confirmed by standard receptor binding assays. Interacts with ACVR1B; the interaction appears to be ligand-dependent as it is diminished by inhibin B and activin A. Interacts with ACVR2A, ACVR2B, ACVRL1 and BMPR1B. Interacts with HECTD1. Expressed in pituitary gland, testis and liver. Isoform 2 is expressed pituitary gland and testis.

The protein localises to the membrane. Its subcellular location is the secreted. Its function is as follows. Seems to be a coreceptor in inhibin signaling, but seems not to be a high-affinity inhibin receptor. Antagonizes activin A signaling in the presence or absence of inhibin B. Necessary to mediate a specific antagonistic effect of inhibin B on activin-stimulated transcription. The chain is Immunoglobulin superfamily member 1 (Igsf1) from Rattus norvegicus (Rat).